Here is a 214-residue protein sequence, read N- to C-terminus: GTP-binding nuclear protein GSP1/Ran (214 aa).

The 165-residue stretch at 4–168 (EVPTFKLVLV…LWLARKLAGN (165 aa)) folds into the Small GTPase Ran-type domain. Residue 15–22 (DGGTGKTT) participates in GTP binding. The switch-I stretch occupies residues 34–42 (KKYIATIGV). Residues Gly-65, 119–122 (NKVD), and 147–149 (SAK) contribute to the GTP site. The segment at 65-81 (GQEKFGGLRDGYYINAQ) is switch-II.

This sequence belongs to the small GTPase superfamily. Ran family. As to quaternary structure, found in a nuclear export complex with RanGTP, exportin and pre-miRNA.

Its subcellular location is the nucleus. In terms of biological role, GTP-binding protein involved in nucleocytoplasmic transport. Required for the import of protein into the nucleus and also for RNA export. Involved in chromatin condensation and control of cell cycle. This Eremothecium gossypii (strain ATCC 10895 / CBS 109.51 / FGSC 9923 / NRRL Y-1056) (Yeast) protein is GTP-binding nuclear protein GSP1/Ran (GSP1).